The sequence spans 113 residues: Protein translation factor SUI1 homolog (113 aa).

It belongs to the SUI1 family.

Functionally, probably involved in translation. The sequence is that of Protein translation factor SUI1 homolog from Spuriopimpinella brachycarpa (Chamnamul).